We begin with the raw amino-acid sequence, 253 residues long: Phycoerythrobilin:ferredoxin oxidoreductase (253 aa).

It belongs to the HY2 family.

The enzyme catalyses (3Z)-phycoerythrobilin + oxidized 2[4Fe-4S]-[ferredoxin] = 15,16-dihydrobiliverdin + reduced 2[4Fe-4S]-[ferredoxin] + 2 H(+). Its function is as follows. Catalyzes the two-electron reduction of the C2 and C3(1) diene system of 15,16-dihydrobiliverdin. This Prochlorococcus marinus (strain AS9601) protein is Phycoerythrobilin:ferredoxin oxidoreductase.